Consider the following 253-residue polypeptide: E3 ubiquitin-protein ligase MARCHF3 (253 aa).

Residues 63 to 123 form an RING-CH-type zinc finger; it reads SPFNDRPMCR…ELCHFRFAVE (61 aa). The Zn(2+) site is built by C71, C74, C87, C89, H97, C100, C113, and C116. The next 2 helical transmembrane spans lie at 145–165 and 182–202; these read LFGDMVCFLFITPLATISGWL and AVGLIALTVALFTIYLFWTLV. A phosphoserine mark is found at S237 and S243.

In terms of assembly, interacts with MARCHF2 and STX6.

It localises to the cytoplasmic vesicle membrane. The protein resides in the early endosome membrane. The catalysed reaction is S-ubiquitinyl-[E2 ubiquitin-conjugating enzyme]-L-cysteine + [acceptor protein]-L-lysine = [E2 ubiquitin-conjugating enzyme]-L-cysteine + N(6)-ubiquitinyl-[acceptor protein]-L-lysine.. The protein operates within protein modification; protein ubiquitination. In terms of biological role, E3 ubiquitin-protein ligase which may be involved in endosomal trafficking. E3 ubiquitin ligases accept ubiquitin from an E2 ubiquitin-conjugating enzyme in the form of a thioester and then directly transfer the ubiquitin to targeted substrates. This Homo sapiens (Human) protein is E3 ubiquitin-protein ligase MARCHF3.